Consider the following 370-residue polypeptide: Sensor protein GtcS (370 aa).

The next 2 helical transmembrane spans lie at 2–22 and 40–60; these read ITAY…VFYL and AWIV…VYLY. One can recognise an HAMP domain in the interval 66–118; the sequence is KRITGPLEKITDAIQKMREGEFAQRLCFKADYELTLIQEHFNEMVAHLEKTEA. The region spanning 133-355 is the Histidine kinase domain; the sequence is DLSHDFKTPI…RLENDLPYRL (223 aa).

The protein localises to the cell membrane. It carries out the reaction ATP + protein L-histidine = ADP + protein N-phospho-L-histidine.. Member of the two-component regulatory system GtcS/GtcR which may act in the control of the transcription of the grs operon which encodes the multienzymes involved in the biosynthesis of the peptide antibiotic gramicidin S. Probably activates GtcR by phosphorylation. This Aneurinibacillus migulanus (Bacillus migulanus) protein is Sensor protein GtcS (gtcS).